The sequence spans 149 residues: Nucleoside diphosphate kinase (149 aa).

The ATP site is built by lysine 9, phenylalanine 57, arginine 85, threonine 91, arginine 102, and asparagine 112. Residue histidine 115 is the Pros-phosphohistidine intermediate of the active site.

It belongs to the NDK family. It depends on Mg(2+) as a cofactor.

The protein resides in the cytoplasm. The catalysed reaction is a 2'-deoxyribonucleoside 5'-diphosphate + ATP = a 2'-deoxyribonucleoside 5'-triphosphate + ADP. It catalyses the reaction a ribonucleoside 5'-diphosphate + ATP = a ribonucleoside 5'-triphosphate + ADP. In terms of biological role, major role in the synthesis of nucleoside triphosphates other than ATP. The ATP gamma phosphate is transferred to the NDP beta phosphate via a ping-pong mechanism, using a phosphorylated active-site intermediate. The chain is Nucleoside diphosphate kinase from Methanococcoides burtonii (strain DSM 6242 / NBRC 107633 / OCM 468 / ACE-M).